A 161-amino-acid chain; its full sequence is MATDVVFDTSMGSFTVELYNEHAPKTCRNFATLAQRGYYNNVIFHRIIPNFMVQTGDPTGTGRGGSSIYGEKFEDEIHPGLKHTGAGVLSMANSGPNTNGSQFFITLAPTPWLDGKHTIFGRVKSGMRVIQRMGLVKTNSEDRPVDEVKIIRAKVVEEGDE.

A PPIase cyclophilin-type domain is found at 1 to 155 (MATDVVFDTS…DEVKIIRAKV (155 aa)).

The protein belongs to the cyclophilin-type PPIase family. PPIL1 subfamily.

It carries out the reaction [protein]-peptidylproline (omega=180) = [protein]-peptidylproline (omega=0). Its function is as follows. PPIases accelerate the folding of proteins. It catalyzes the cis-trans isomerization of proline imidic peptide bonds in oligopeptides. This is Peptidyl-prolyl cis-trans isomerase-like 1 (cyp1) from Aspergillus fumigatus (strain ATCC MYA-4609 / CBS 101355 / FGSC A1100 / Af293) (Neosartorya fumigata).